Reading from the N-terminus, the 606-residue chain is Endo-beta-1,4-xylanase Xyn10C (606 aa).

Residues 1–19 form the signal peptide; sequence MKKIQQLLMLSLISSTLIA. The N-palmitoyl cysteine moiety is linked to residue cysteine 20. Cysteine 20 carries S-diacylglycerol cysteine lipidation. A disordered region spans residues 23 to 64; it reads GGGGGSTPTTSSSPQSSSPASTPSSASSSSIISSSSLSSSLS. The span at 29-64 shows a compositional bias: low complexity; sequence TPTTSSSPQSSSPASTPSSASSSSIISSSSLSSSLS. The CBM15 domain maps to 91–242; the sequence is GNVVIEVDMA…KSVTITLAQE (152 aa). Residues asparagine 106 and glutamine 171 each coordinate a carbohydrate. A disulfide bond links cysteine 183 and cysteine 200. Residue glutamine 217 participates in a carbohydrate binding. Positions 245-596 constitute a GH10 domain; it reads SANVDHLRDL…KPALRGFADA (352 aa). Substrate-binding positions include 296–299, histidine 332, and asparagine 384; that span reads NIMK. Glutamate 385 acts as the Proton donor in catalysis. Glutamate 497 serves as the catalytic Nucleophile. Tryptophan 552 provides a ligand contact to substrate.

The protein belongs to the glycosyl hydrolase 10 (cellulase F) family.

The protein resides in the cell outer membrane. The catalysed reaction is Endohydrolysis of (1-&gt;4)-beta-D-xylosidic linkages in xylans.. Its pathway is glycan degradation; xylan degradation. Functionally, endo-acting xylanase which specifically cleaves internal linkages on the xylan backbone, releasing xylooligosaccharides. Is able to hydrolyze oat spelt xylan, the arabinoxylans from wheat and rye, and glucuronoxylan. Also displays very low activity against xylooligosaccharides. During the xylan degradation process, Xyn10C may act on the soluble xylans and long xylooligosaccharides products released by the secreted xylanases Xyn11A, Xyn11B and Xyn10A. The polypeptide is Endo-beta-1,4-xylanase Xyn10C (xyn10C) (Cellvibrio japonicus (Pseudomonas fluorescens subsp. cellulosa)).